A 365-amino-acid chain; its full sequence is MNIMDFNVKKLAADAGTFLSRAVQFTEEKLGQAEKTELDAHLENLLSKAECTKIWTEKIMKQTEVLLQPNPNARIEEFVYEKLDRKAPSRINNPELLGQYMIDAGTEFGPGTAYGNALIKCGETQKRIGTADRELIQTSALNFLTPLRNFIEGDYKTIAKERKLLQNKRLDLDAAKTRLKKAKAAETRASSEQELRITQSEFDRQAEITRLLLEGISSTHAHHLRCLNDFVEAQMTYYAQCYQYMLDLQKQLGSFPSNYHSNNNQTAVAPVPSASSNVIGSSALTSTSSLVITSPSNLTDLKECGGSRRARVLYDYDAANSTELSLLADEVITVFSVVGMDSDWLMGERGNQKGRVPITYLELLN.

Position 1 is an N-acetylmethionine (methionine 1). The interval 1-30 (MNIMDFNVKKLAADAGTFLSRAVQFTEEKL) is membrane-binding amphipathic helix. The required for membrane binding stretch occupies residues 1–37 (MNIMDFNVKKLAADAGTFLSRAVQFTEEKLGQAEKTE). Residues 27–261 (EEKLGQAEKT…LGSFPSNYHS (235 aa)) enclose the BAR domain. Threonine 145 is modified (phosphothreonine; by CDK5). Positions 155 to 195 (YKTIAKERKLLQNKRLDLDAAKTRLKKAKAAETRASSEQEL) form a coiled coil. One can recognise an SH3 domain in the interval 305 to 365 (GGSRRARVLY…VPITYLELLN (61 aa)).

The protein belongs to the endophilin family. As to quaternary structure, homodimer, and heterodimer with SH3GLB2. Binds BAX; induction of apoptosis augments BAX binding. Binds DNM1, HTT, AMPH, BIN1 and ARFGAP1. Interacts with UVRAG; UVRAG bridges the interaction to BECN1 indicative for an association with the PI3K complex II (PI3KC3-C2). Phosphorylated at Thr-145 by CDK5; this phosphorylation is required for autophagy induction in starved neurons and facilitates homodimerization.

It is found in the cytoplasm. Its subcellular location is the golgi apparatus membrane. It localises to the mitochondrion outer membrane. The protein localises to the cytoplasmic vesicle. The protein resides in the autophagosome membrane. It is found in the midbody. In terms of biological role, may be required for normal outer mitochondrial membrane dynamics. Required for coatomer-mediated retrograde transport in certain cells. May recruit other proteins to membranes with high curvature. May promote membrane fusion. Involved in activation of caspase-dependent apoptosis by promoting BAX/BAK1 activation. Involved in caspase-independent apoptosis during nutrition starvation and involved in the regulation of autophagy. Activates lipid kinase activity of PIK3C3 during autophagy probably by associating with the PI3K complex II (PI3KC3-C2). Associated with PI3KC3-C2 during autophagy may regulate the trafficking of ATG9A from the Golgi complex to the peripheral cytoplasm for the formation of autophagosomes by inducing Golgi membrane tubulation and fragmentation. Involved in regulation of degradative endocytic trafficking and cytokinesis, probably in the context of PI3KC3-C2. This Bos taurus (Bovine) protein is Endophilin-B1 (SH3GLB1).